We begin with the raw amino-acid sequence, 427 residues long: Transcriptional enhancer factor TEF-3 (427 aa).

The disordered stretch occupies residues 1–32 (MTSNEWSSPDSPEGSSISGGSQALDKPIDNDA). The span at 7–21 (SSPDSPEGSSISGGS) shows a compositional bias: low complexity. The segment at residues 29–105 (DNDAEGVWSP…QVLARRKARE (77 aa)) is a DNA-binding region (TEA). Residues 78–94 (IKLRTGKTRTRKQVSSH) carry the Nuclear localization signal motif. Residues 163–206 (QPGTSHDVKPFSQNTYPVQPPLPLPGFESPAGPTPSPSAPLAPP) are disordered. Pro residues predominate over residues 194–205 (GPTPSPSAPLAP).

Interacts with WWTR1/TAZ. Interacts with YAP1. In terms of tissue distribution, preferentially expressed in lung and in skeletal muscle.

It is found in the nucleus. In terms of biological role, transcription factor which plays a key role in the Hippo signaling pathway, a pathway involved in organ size control and tumor suppression by restricting proliferation and promoting apoptosis. The core of this pathway is composed of a kinase cascade wherein MST1/MST2, in complex with its regulatory protein SAV1, phosphorylates and activates LATS1/2 in complex with its regulatory protein MOB1, which in turn phosphorylates and inactivates YAP1 oncoprotein and WWTR1/TAZ. Acts by mediating gene expression of YAP1 and WWTR1/TAZ, thereby regulating cell proliferation, migration and epithelial mesenchymal transition (EMT) induction. Binds specifically and non-cooperatively to the Sph and GT-IIC 'enhansons' (5'-GTGGAATGT-3') and activates transcription. Binds to the M-CAT motif. Might play a role in the embryonic development of skeletal muscle. This is Transcriptional enhancer factor TEF-3 (Tead4) from Mus musculus (Mouse).